A 414-amino-acid polypeptide reads, in one-letter code: Enolase (414 aa).

Glutamine 162 contacts (2R)-2-phosphoglycerate. Glutamate 204 (proton donor) is an active-site residue. Positions 239, 280, and 307 each coordinate Mg(2+). (2R)-2-phosphoglycerate contacts are provided by lysine 332, arginine 361, serine 362, and lysine 383. Residue lysine 332 is the Proton acceptor of the active site.

The protein belongs to the enolase family. It depends on Mg(2+) as a cofactor.

It localises to the cytoplasm. Its subcellular location is the secreted. The protein resides in the cell surface. It carries out the reaction (2R)-2-phosphoglycerate = phosphoenolpyruvate + H2O. It participates in carbohydrate degradation; glycolysis; pyruvate from D-glyceraldehyde 3-phosphate: step 4/5. Functionally, catalyzes the reversible conversion of 2-phosphoglycerate (2-PG) into phosphoenolpyruvate (PEP). It is essential for the degradation of carbohydrates via glycolysis. The protein is Enolase of Campylobacter jejuni subsp. jejuni serotype O:2 (strain ATCC 700819 / NCTC 11168).